The following is a 500-amino-acid chain: Glycerol-3-phosphate acyltransferase 7 (500 aa).

The next 2 helical transmembrane spans lie at 38-58 (GLIR…LDVL) and 235-255 (ALII…RIFV). An HXXXXD motif motif is present at residues 298–303 (HRTLMD).

This sequence belongs to the GPAT/DAPAT family. Weakly or not expressed in roots, leaves, seedlings, developing siliques and flower buds.

It is found in the membrane. It carries out the reaction sn-glycerol 3-phosphate + an acyl-CoA = a 1-acyl-sn-glycero-3-phosphate + CoA. The protein operates within phospholipid metabolism; CDP-diacylglycerol biosynthesis; CDP-diacylglycerol from sn-glycerol 3-phosphate: step 1/3. Its function is as follows. Esterifies acyl-group from acyl-ACP to the sn-1 position of glycerol-3-phosphate, an essential step in glycerolipid biosynthesis. In Arabidopsis thaliana (Mouse-ear cress), this protein is Glycerol-3-phosphate acyltransferase 7 (GPAT7).